The following is a 217-amino-acid chain: Flagellar L-ring protein 2 (217 aa).

The first 15 residues, 1–15, serve as a signal peptide directing secretion; it reads MRILLALTWLAWLGA. Cys16 carries the N-palmitoyl cysteine lipid modification. Cys16 carries the S-diacylglycerol cysteine lipid modification.

Belongs to the FlgH family. In terms of assembly, the basal body constitutes a major portion of the flagellar organelle and consists of four rings (L,P,S, and M) mounted on a central rod.

The protein localises to the cell outer membrane. It is found in the bacterial flagellum basal body. Assembles around the rod to form the L-ring and probably protects the motor/basal body from shearing forces during rotation. This is Flagellar L-ring protein 2 from Burkholderia thailandensis (strain ATCC 700388 / DSM 13276 / CCUG 48851 / CIP 106301 / E264).